Reading from the N-terminus, the 504-residue chain is Maturase K (504 aa).

Belongs to the intron maturase 2 family. MatK subfamily.

It is found in the plastid. The protein localises to the chloroplast. Its function is as follows. Usually encoded in the trnK tRNA gene intron. Probably assists in splicing its own and other chloroplast group II introns. The sequence is that of Maturase K from Matthiola incana (Common stock).